The sequence spans 569 residues: 63 kDa chaperonin, mitochondrial (569 aa).

The transit peptide at 1 to 29 directs the protein to the mitochondrion; that stretch reads MFKMYRSPHITRNSFKYLKATNINSCRFY.

It belongs to the chaperonin (HSP60) family. In terms of assembly, forms a single seven-member ring complex, in tight association with the p60 protein. As to expression, testis.

Its subcellular location is the mitochondrion. In terms of biological role, implicated in mitochondrial protein import and macromolecular assembly. May facilitate the correct folding of imported proteins. May also prevent misfolding and promote the refolding and proper assembly of unfolded polypeptides generated under stress conditions in the mitochondrial matrix. This Heliothis virescens (Tobacco budworm moth) protein is 63 kDa chaperonin, mitochondrial.